We begin with the raw amino-acid sequence, 70 residues long: Envelope small membrane protein (70 aa).

The N-myristoyl glycine; by host moiety is linked to residue Gly-2. The endoplasmic reticulum retention signal stretch occupies residues 2–15 (GSLWSKISQLFVDA). The Virion surface segment spans residues 2–25 (GSLWSKISQLFVDAFTEFLVSVVD). A helical transmembrane segment spans residues 26–46 (IVIFLAILFGFTVAGWLLVFL). Residues 47 to 70 (LRVVCSALLRSRSAIHSPELSKVL) are Intravirion-facing.

The protein belongs to the arteriviridae E protein family. Homooligomer. Associates with itself into higher-order structures, including dimers, trimers and tetramers. Associates with the GP2b-GP3-GP4 complex. In terms of processing, myristoylated. Post-translationally, not glycosylated.

Its subcellular location is the virion membrane. The protein localises to the host endoplasmic reticulum membrane. The protein resides in the host Golgi apparatus membrane. It is found in the secreted. In terms of biological role, minor envelope protein. May function as a viroporin in the virion envelope that facilitates uncoating of the virus in order to release the genomic RNA into the cytoplasm for subsequent replication. In Sus scrofa (Pig), this protein is Envelope small membrane protein (GP2b).